Here is a 376-residue protein sequence, read N- to C-terminus: Serpin B6 (376 aa).

N-acetylmethionine is present on M1. The residue at position 151 (S151) is a Phosphoserine. The residue at position 195 (K195) is an N6-acetyllysine.

It belongs to the serpin family. Ov-serpin subfamily. As to quaternary structure, forms a complex with the monomeric form of beta-tryptase.

It localises to the cytoplasm. Its function is as follows. Inhibitor of cathepsin G, kallikrein-8 and thrombin. May play an important role in the inner ear in the protection against leakage of lysosomal content during stress. May be involved in the regulation of serine proteinases present in the brain or extravasated from the blood. The protein is Serpin B6 (SERPINB6) of Macaca fascicularis (Crab-eating macaque).